Here is a 213-residue protein sequence, read N- to C-terminus: Thymidylate kinase (213 aa).

Residue 10–17 (GLEGAGKT) coordinates ATP.

It belongs to the thymidylate kinase family.

It carries out the reaction dTMP + ATP = dTDP + ADP. Its function is as follows. Phosphorylation of dTMP to form dTDP in both de novo and salvage pathways of dTTP synthesis. The protein is Thymidylate kinase of Klebsiella pneumoniae (strain 342).